The sequence spans 350 residues: Thymidine kinase (350 aa).

15-22 (GAHGLGKT) contacts ATP. The active-site Proton acceptor is the Glu-44. Gln-88 is a binding site for substrate. Position 178 (Arg-178) interacts with ATP. Arg-184 contacts substrate.

Belongs to the herpesviridae thymidine kinase family. Homodimer.

The enzyme catalyses thymidine + ATP = dTMP + ADP + H(+). Functionally, catalyzes the transfer of the gamma-phospho group of ATP to thymidine to generate dTMP in the salvage pathway of pyrimidine synthesis. The dTMP serves as a substrate for DNA polymerase during viral DNA replication. Allows the virus to be reactivated and to grow in non-proliferative cells lacking a high concentration of phosphorylated nucleic acid precursors. This Bos taurus (Bovine) protein is Thymidine kinase.